A 352-amino-acid polypeptide reads, in one-letter code: Holliday junction branch migration complex subunit RuvB (352 aa).

The interval 1-182 is large ATPase domain (RuvB-L); the sequence is MRIELLNTPP…FGINSRFDYY (182 aa). ATP contacts are provided by residues Ile-21, Arg-22, Gly-63, Lys-66, Thr-67, Thr-68, 129–131, Arg-172, Tyr-182, and Arg-219; that span reads EDF. A Mg(2+)-binding site is contributed by Thr-67. The segment at 183–253 is small ATPAse domain (RuvB-S); it reads EPELLTRIII…IAMKTLECLE (71 aa). The head domain (RuvB-H) stretch occupies residues 256–352; sequence EEGLDEMDKK…LPLFDESEAD (97 aa). DNA is bound by residues Arg-292, Arg-311, and Arg-316.

This sequence belongs to the RuvB family. As to quaternary structure, homohexamer. Forms an RuvA(8)-RuvB(12)-Holliday junction (HJ) complex. HJ DNA is sandwiched between 2 RuvA tetramers; dsDNA enters through RuvA and exits via RuvB. An RuvB hexamer assembles on each DNA strand where it exits the tetramer. Each RuvB hexamer is contacted by two RuvA subunits (via domain III) on 2 adjacent RuvB subunits; this complex drives branch migration. In the full resolvosome a probable DNA-RuvA(4)-RuvB(12)-RuvC(2) complex forms which resolves the HJ.

Its subcellular location is the cytoplasm. The enzyme catalyses ATP + H2O = ADP + phosphate + H(+). Its function is as follows. The RuvA-RuvB-RuvC complex processes Holliday junction (HJ) DNA during genetic recombination and DNA repair, while the RuvA-RuvB complex plays an important role in the rescue of blocked DNA replication forks via replication fork reversal (RFR). RuvA specifically binds to HJ cruciform DNA, conferring on it an open structure. The RuvB hexamer acts as an ATP-dependent pump, pulling dsDNA into and through the RuvAB complex. RuvB forms 2 homohexamers on either side of HJ DNA bound by 1 or 2 RuvA tetramers; 4 subunits per hexamer contact DNA at a time. Coordinated motions by a converter formed by DNA-disengaged RuvB subunits stimulates ATP hydrolysis and nucleotide exchange. Immobilization of the converter enables RuvB to convert the ATP-contained energy into a lever motion, pulling 2 nucleotides of DNA out of the RuvA tetramer per ATP hydrolyzed, thus driving DNA branch migration. The RuvB motors rotate together with the DNA substrate, which together with the progressing nucleotide cycle form the mechanistic basis for DNA recombination by continuous HJ branch migration. Branch migration allows RuvC to scan DNA until it finds its consensus sequence, where it cleaves and resolves cruciform DNA. The sequence is that of Holliday junction branch migration complex subunit RuvB from Chlorobium chlorochromatii (strain CaD3).